Here is a 118-residue protein sequence, read N- to C-terminus: Ribonuclease P protein component 2 (118 aa).

The protein belongs to the eukaryotic/archaeal RNase P protein component 2 family. As to quaternary structure, consists of a catalytic RNA component and at least 4-5 protein subunits.

The protein resides in the cytoplasm. It catalyses the reaction Endonucleolytic cleavage of RNA, removing 5'-extranucleotides from tRNA precursor.. Part of ribonuclease P, a protein complex that generates mature tRNA molecules by cleaving their 5'-ends. This Pyrococcus abyssi (strain GE5 / Orsay) protein is Ribonuclease P protein component 2.